The primary structure comprises 104 residues: Late embryogenis abundant protein 41 (104 aa).

The N-terminal 31 residues, Met-1–Tyr-31, are a transit peptide targeting the mitochondrion.

It belongs to the LEA type 3 family.

Its subcellular location is the mitochondrion. In Arabidopsis thaliana (Mouse-ear cress), this protein is Late embryogenis abundant protein 41.